A 337-amino-acid polypeptide reads, in one-letter code: Nicotinate-nucleotide--dimethylbenzimidazole phosphoribosyltransferase (337 aa).

Catalysis depends on Glu-305, which acts as the Proton acceptor.

Belongs to the CobT family.

The enzyme catalyses 5,6-dimethylbenzimidazole + nicotinate beta-D-ribonucleotide = alpha-ribazole 5'-phosphate + nicotinate + H(+). It participates in nucleoside biosynthesis; alpha-ribazole biosynthesis; alpha-ribazole from 5,6-dimethylbenzimidazole: step 1/2. Catalyzes the synthesis of alpha-ribazole-5'-phosphate from nicotinate mononucleotide (NAMN) and 5,6-dimethylbenzimidazole (DMB). In Roseobacter denitrificans (strain ATCC 33942 / OCh 114) (Erythrobacter sp. (strain OCh 114)), this protein is Nicotinate-nucleotide--dimethylbenzimidazole phosphoribosyltransferase.